Consider the following 331-residue polypeptide: Fructose-1,6-bisphosphatase class 1 2 (331 aa).

Mg(2+) is bound by residues E80, D98, L100, and D101. Residues 101–104 (DGSS) and N189 each bind substrate. E261 provides a ligand contact to Mg(2+).

The protein belongs to the FBPase class 1 family. Homotetramer. Requires Mg(2+) as cofactor.

It is found in the cytoplasm. It catalyses the reaction beta-D-fructose 1,6-bisphosphate + H2O = beta-D-fructose 6-phosphate + phosphate. It functions in the pathway carbohydrate biosynthesis; Calvin cycle. This chain is Fructose-1,6-bisphosphatase class 1 2, found in Cereibacter sphaeroides (strain ATCC 17029 / ATH 2.4.9) (Rhodobacter sphaeroides).